Reading from the N-terminus, the 500-residue chain is Glycerol kinase (500 aa).

Thr12 provides a ligand contact to ADP. ATP is bound by residues Thr12, Thr13, and Ser14. Residue Thr12 participates in sn-glycerol 3-phosphate binding. Residue Arg16 coordinates ADP. Sn-glycerol 3-phosphate is bound by residues Arg82, Glu83, Tyr135, and Asp245. Glycerol is bound by residues Arg82, Glu83, Tyr135, Asp245, and Gln246. ADP-binding residues include Thr267 and Gly310. The ATP site is built by Thr267, Gly310, Gln314, and Gly411. Residues Gly411 and Asn415 each contribute to the ADP site.

Belongs to the FGGY kinase family. Homotetramer and homodimer (in equilibrium).

It catalyses the reaction glycerol + ATP = sn-glycerol 3-phosphate + ADP + H(+). Its pathway is polyol metabolism; glycerol degradation via glycerol kinase pathway; sn-glycerol 3-phosphate from glycerol: step 1/1. Activated by phosphorylation and inhibited by fructose 1,6-bisphosphate (FBP). Key enzyme in the regulation of glycerol uptake and metabolism. Catalyzes the phosphorylation of glycerol to yield sn-glycerol 3-phosphate. This chain is Glycerol kinase, found in Clostridium perfringens (strain ATCC 13124 / DSM 756 / JCM 1290 / NCIMB 6125 / NCTC 8237 / Type A).